We begin with the raw amino-acid sequence, 348 residues long: Propane 2-monooxygenase, reductase component (348 aa).

In terms of domain architecture, 2Fe-2S ferredoxin-type spans H5–D95. C39, C44, C47, and C79 together coordinate [2Fe-2S] cluster. In terms of domain architecture, FAD-binding FR-type spans I105–K206.

The protein belongs to the bacterial ring-hydroxylating dioxygenase ferredoxin reductase family. As to quaternary structure, the propane 2-monooxygenase multicomponent enzyme system is composed of an electron transfer component and a monooxygenase component interacting with the effector protein MimD. The electron transfer component is composed of a reductase (MimB), and the monooxygenase component is formed by a large subunit (MimA) and a small subunit (MimC). Requires FAD as cofactor. [2Fe-2S] cluster is required as a cofactor.

Functionally, reductase component of the propane 2-monooxygenase multicomponent enzyme system which is involved in the degradation of propane via the O2-dependent hydroxylation of propane. Reductase catalyzes the transfer of electrons from NADH or NADPH to monooxygenase. The protein is Propane 2-monooxygenase, reductase component of Mycolicibacterium goodii (Mycobacterium goodii).